Consider the following 160-residue polypeptide: 2-C-methyl-D-erythritol 2,4-cyclodiphosphate synthase (160 aa).

A divalent metal cation-binding residues include Asp10 and His12. 4-CDP-2-C-methyl-D-erythritol 2-phosphate is bound by residues 10–12 (DVH) and 36–37 (HS). Position 44 (His44) interacts with a divalent metal cation. Residues 58 to 60 (DIG), 63 to 67 (FPDTD), 102 to 108 (AQAPKML), 134 to 137 (TTTE), Phe141, and Arg144 each bind 4-CDP-2-C-methyl-D-erythritol 2-phosphate.

It belongs to the IspF family. As to quaternary structure, homotrimer. A divalent metal cation is required as a cofactor.

The catalysed reaction is 4-CDP-2-C-methyl-D-erythritol 2-phosphate = 2-C-methyl-D-erythritol 2,4-cyclic diphosphate + CMP. The protein operates within isoprenoid biosynthesis; isopentenyl diphosphate biosynthesis via DXP pathway; isopentenyl diphosphate from 1-deoxy-D-xylulose 5-phosphate: step 4/6. Its function is as follows. Involved in the biosynthesis of isopentenyl diphosphate (IPP) and dimethylallyl diphosphate (DMAPP), two major building blocks of isoprenoid compounds. Catalyzes the conversion of 4-diphosphocytidyl-2-C-methyl-D-erythritol 2-phosphate (CDP-ME2P) to 2-C-methyl-D-erythritol 2,4-cyclodiphosphate (ME-CPP) with a corresponding release of cytidine 5-monophosphate (CMP). In Shewanella amazonensis (strain ATCC BAA-1098 / SB2B), this protein is 2-C-methyl-D-erythritol 2,4-cyclodiphosphate synthase.